Reading from the N-terminus, the 651-residue chain is Apical membrane antigen 1-like protein (651 aa).

Positions 1-41 are cleaved as a signal peptide; sequence MPTESRSILARAEETRCRHLSRLLRAGLVFLLCDVLTSCLA. The propeptide at 42-81 is removed in mature form; the sequence is TPELQNTVIRSSKAHHLQLLFSSRSTPAVKFPLDATLSAP. The Extracellular portion of the chain corresponds to 42-570; sequence TPELQNTVIR…VEKEGSGGNT (529 aa). Intrachain disulfides connect C141–C309, C215–C248, C264–C277, C327–C417, C347–C408, C441–C463, and C453–C475. A glycan (N-linked (GlcNAc...) asparagine) is linked at N230. The 1; approximate repeat unit spans residues 483–486; it reads PPVK. The segment at 483–531 is 12 x 4 AA approximate tandem-repeats of P-P-V-E; sequence PPVKPPVEPPVEPPVEPPVEPPVEPPVEPPVEPPVEPPVEPPVVEPPTE. The segment covering 483–547 has biased composition (pro residues); sequence PPVKPPVEPP…EPPVVLPPTP (65 aa). The disordered stretch occupies residues 483-567; that stretch reads PPVKPPVEPP…DETVEKEGSG (85 aa). Tandem repeats lie at residues 487–490, 491–494, 495–498, 499–502, 503–506, 507–510, 511–514, 515–518, and 519–522. The 11; approximate repeat unit spans residues 523–527; it reads PPVVE. The 12; approximate repeat unit spans residues 528 to 531; that stretch reads PPTE. Residues 571-591 form a helical membrane-spanning segment; it reads ALIAGSVLGMLIILALVGTCV. The Cytoplasmic segment spans residues 592-651; it reads GFYYRKRPLPPTERPTVEASGGREVEGPSDVAVPPDHSWWGEGEHETESLLGSRAVDAEF. The disordered stretch occupies residues 598-651; the sequence is RPLPPTERPTVEASGGREVEGPSDVAVPPDHSWWGEGEHETESLLGSRAVDAEF.

The protein belongs to the apicomplexan parasites AMA1 family. Proteolytically cleaved within its transmembrane domain, releasing a soluble form from the cell surface.

The protein resides in the cell membrane. Its subcellular location is the secreted. Its function is as follows. May play a role in host cell invasion. The polypeptide is Apical membrane antigen 1-like protein (Toxoplasma gondii (strain ATCC 50861 / VEG)).